A 151-amino-acid polypeptide reads, in one-letter code: MSTPDNRSVNFFSLFRRGQHYSKTWPLEKRLAPVFVENRVIKMTCYAIRFMPPIAVFTLCWQIALGGQLGPAVATALFALSLPMQGLWWLGKRSVTPLPPAILNWFYDVRGKLQESGQVLAPVEGKPDYQALADTLKRAFKQLDKTFLDDL.

2 helical membrane passes run 46 to 65 (YAIR…QIAL) and 69 to 91 (LGPA…WWLG).

Belongs to the UPF0208 family.

It is found in the cell inner membrane. The chain is UPF0208 membrane protein YfbV from Escherichia coli O1:K1 / APEC.